Here is a 167-residue protein sequence, read N- to C-terminus: Ammonium/H(+) antiporter subunit AmhM (167 aa).

The RCK C-terminal domain maps to 79 to 163 (IDRIKLIRKQ…IQKFEELCAC (85 aa)).

As to quaternary structure, interacts with AmhT.

It is found in the cell membrane. In terms of biological role, modulates the activity of the ammonium/proton antiporter AmhT. The polypeptide is Ammonium/H(+) antiporter subunit AmhM (amhM) (Alkalihalophilus pseudofirmus (strain ATCC BAA-2126 / JCM 17055 / OF4) (Bacillus pseudofirmus)).